Here is a 503-residue protein sequence, read N- to C-terminus: DEAD-box ATP-dependent RNA helicase CshA (503 aa).

The short motif at 2–30 is the Q motif element; the sequence is QNFKELGISDKTVETLEAMGFKEPTPIQK. The Helicase ATP-binding domain maps to 33–203; sequence IPYTLEGKDI…QQFMKSPQIV (171 aa). Position 46 to 53 (46 to 53) interacts with ATP; it reads AQTGTGKT. The DEAD box signature appears at 150–153; that stretch reads DEAD. Residues 214 to 375 enclose the Helicase C-terminal domain; sequence QIDEYYTIVK…LRPPHRKEVL (162 aa). The disordered stretch occupies residues 436–503; it reads EKPLARKNRQ…KGRTFADLQK (68 aa). A compositionally biased stretch (basic residues) spans 466–480; sequence KRSKGNFNKKKGKKT. Over residues 481 to 490 the composition is skewed to basic and acidic residues; sequence DRRERQDKGR.

This sequence belongs to the DEAD box helicase family. CshA subfamily. Oligomerizes, may be a member of the RNA degradosome.

Its subcellular location is the cytoplasm. The enzyme catalyses ATP + H2O = ADP + phosphate + H(+). Its function is as follows. DEAD-box RNA helicase possibly involved in RNA degradation. Unwinds dsRNA in both 5'- and 3'-directions, has RNA-dependent ATPase activity. The protein is DEAD-box ATP-dependent RNA helicase CshA of Staphylococcus haemolyticus (strain JCSC1435).